The following is a 613-amino-acid chain: Chaperone protein DnaK (613 aa).

Residues 579–613 (MYQSASSTTQTGSGNQNSSKQENDKTVDAEYKEKS) form a disordered region. The segment covering 581 to 597 (QSASSTTQTGSGNQNSS) has biased composition (low complexity). Positions 599-613 (QENDKTVDAEYKEKS) are enriched in basic and acidic residues.

The protein belongs to the heat shock protein 70 family.

Functionally, acts as a chaperone. The chain is Chaperone protein DnaK from Thermoplasma volcanium (strain ATCC 51530 / DSM 4299 / JCM 9571 / NBRC 15438 / GSS1).